Reading from the N-terminus, the 339-residue chain is Zinc transporter 3 (339 aa).

Residues 1–25 (MKTKNVKLLFFFFSVSLLLIAVVNA) form the signal peptide. The Extracellular portion of the chain corresponds to 26 to 54 (AEGHSHGGPKCECSHEDDHENKAGARKYK). The chain crosses the membrane as a helical span at residues 55–75 (IAAIPTVLIAGIIGVLFPLLG). Residues 76–86 (KVFPSLRPETC) are Cytoplasmic-facing. A helical membrane pass occupies residues 87 to 107 (FFFVTKAFAAGVILATGFMHV). The Extracellular segment spans residues 108 to 123 (LPEAYEMLNSPCLTSE). Residues 124–144 (AWEFPFTGFIAMIAAILTLSV) form a helical membrane-spanning segment. At 145–184 (DTFATSSFYKSHCKASKRVSDGETGESSVDSEKVQILRTR) the chain is on the cytoplasmic side. The helical transmembrane segment at 185 to 205 (VIAQVLELGIIVHSVVIGISL) threads the bilayer. At 206–216 (GASQSPDAAKA) the chain is on the extracellular side. A helical transmembrane segment spans residues 217 to 237 (LFIALMFHQCFEGLGLGGCIA). Topologically, residues 238–247 (QGKFKCLSVT) are cytoplasmic. A helical membrane pass occupies residues 248-268 (IMSTFFAITTPIGIVVGMGIA). The Extracellular segment spans residues 269–278 (NSYDESSPTA). A helical membrane pass occupies residues 279–299 (LIVQGVLNAASAGILIYMSLV). Residues 300 to 315 (DLLAADFTHPKMQSNT) are Cytoplasmic-facing. Residues 316-336 (GLQIMAHIALLLGAGLMSLLA) traverse the membrane as a helical segment. Residues 337 to 339 (KWA) are Extracellular-facing.

This sequence belongs to the ZIP transporter (TC 2.A.5) family. As to expression, expressed predominantly in the roots of zinc-deficient plants.

It is found in the cell membrane. Mediates zinc uptake from the rhizosphere. May also transport other divalent cations. This chain is Zinc transporter 3 (ZIP3), found in Arabidopsis thaliana (Mouse-ear cress).